The chain runs to 361 residues: Large ribosomal subunit protein mL45 (361 aa).

Residues 319-361 (EPPKELSAGDAEVKQVDSVGEQSKEQLPLATPVESHTKPSLAI) are disordered.

The protein belongs to the mitochondrion-specific ribosomal protein mL45 family.

It localises to the mitochondrion. The chain is Large ribosomal subunit protein mL45 (mRpL45) from Drosophila melanogaster (Fruit fly).